Reading from the N-terminus, the 143-residue chain is Peptide methionine sulfoxide reductase MsrB (143 aa).

A MsrB domain is found at 16–139 (DAELRRRLTP…NSAALNFEAK (124 aa)). Residues cysteine 55, cysteine 58, cysteine 104, and cysteine 107 each coordinate Zn(2+). The active-site Nucleophile is cysteine 128.

It belongs to the MsrB Met sulfoxide reductase family. Requires Zn(2+) as cofactor.

It catalyses the reaction L-methionyl-[protein] + [thioredoxin]-disulfide + H2O = L-methionyl-(R)-S-oxide-[protein] + [thioredoxin]-dithiol. The protein is Peptide methionine sulfoxide reductase MsrB of Burkholderia thailandensis (strain ATCC 700388 / DSM 13276 / CCUG 48851 / CIP 106301 / E264).